A 480-amino-acid polypeptide reads, in one-letter code: Ciliated left-right organizer protein containing ZP-N domains homolog (480 aa).

An N-terminal signal peptide occupies residues 1 to 23; sequence MKNQHNTFWVLCLLFVMFDETFS.

In terms of tissue distribution, expressed specifically by cells of the ciliated left-right organizer.

Its subcellular location is the secreted. This chain is Ciliated left-right organizer protein containing ZP-N domains homolog, found in Xenopus tropicalis (Western clawed frog).